Here is a 131-residue protein sequence, read N- to C-terminus: Leptin receptor gene-related protein (131 aa).

The next 4 helical transmembrane spans lie at 7–27 (LVAL…GCAL), 32–52 (VYWP…HFIA), 69–89 (LAYF…VILA), and 100–120 (GLVL…FLVF).

The protein belongs to the OB-RGRP/VPS55 family. Interacts with LEPR. Interacts with RAB13.

It is found in the golgi apparatus membrane. It localises to the endosome membrane. In terms of biological role, negatively regulates leptin receptor (LEPR) cell surface expression, and thus decreases response to leptin/LEP. Negatively regulates growth hormone (GH) receptor cell surface expression in liver. May play a role in liver resistance to GH during periods of reduced nutrient availability. In Bos taurus (Bovine), this protein is Leptin receptor gene-related protein (LEPROT).